The primary structure comprises 357 residues: 3'(2'),5'-bisphosphate nucleotidase (357 aa).

Residue Asp49 is the Proton acceptor of the active site. 4 residues coordinate Mg(2+): Glu72, Asp142, Ile144, and Asp145. Thr147 functions as the Proton acceptor in the catalytic mechanism. Positions 147, 241, 264, 267, 281, and 294 each coordinate adenosine 3',5'-bisphosphate. Residues His241, Ser264, Lys267, Arg281, and Asp294 each contribute to the AMP site. Asp294 serves as a coordination point for Mg(2+).

The protein belongs to the inositol monophosphatase superfamily. Mg(2+) is required as a cofactor.

Its subcellular location is the cytoplasm. The protein localises to the nucleus. It carries out the reaction 3'-phosphoadenylyl sulfate + H2O = adenosine 5'-phosphosulfate + phosphate. The catalysed reaction is adenosine 3',5'-bisphosphate + H2O = AMP + phosphate. The enzyme catalyses adenosine 2',5'-bisphosphate + H2O = AMP + phosphate. With respect to regulation, phosphatase activity is very sensitive to lithium and moderately sensitive to sodium. The inhibitory effects of lithium and sodium are overcome by high concentrations of potassium. Lithium exerts its inhibitory action by blocking the products of the PAP hydrolysis at the active site. Its function is as follows. Phosphatase that converts adenosine 3'-phosphate 5'-phosphosulfate (PAPS) to adenosine 5'-phosphosulfate (APS) and 3'(2')-phosphoadenosine 5'-phosphate (PAP) to AMP. May regulate the flux of sulfur in the sulfur-activation pathway by converting PAPS to APS. Involved in salt tolerance. Confers resistance to lithium. Shows no activity on inositol mono- and diphosphates, 3'-AMP, AMP, nicotinamide adenine dinucleotide phosphate (NADP), and p-nitrophenylphosphate. The protein is 3'(2'),5'-bisphosphate nucleotidase (MET22) of Saccharomyces cerevisiae (strain ATCC 204508 / S288c) (Baker's yeast).